The primary structure comprises 624 residues: tRNA uridine 5-carboxymethylaminomethyl modification enzyme MnmG (624 aa).

Residues 13–18 (GGGHAG), V125, and S180 contribute to the FAD site. NAD(+) is bound at residue 273–287 (GPRYCPSIEDKIVRF). Q370 lines the FAD pocket.

It belongs to the MnmG family. In terms of assembly, homodimer. Heterotetramer of two MnmE and two MnmG subunits. FAD is required as a cofactor.

The protein localises to the cytoplasm. In terms of biological role, NAD-binding protein involved in the addition of a carboxymethylaminomethyl (cmnm) group at the wobble position (U34) of certain tRNAs, forming tRNA-cmnm(5)s(2)U34. The protein is tRNA uridine 5-carboxymethylaminomethyl modification enzyme MnmG of Legionella pneumophila (strain Corby).